Consider the following 214-residue polypeptide: NADH-quinone oxidoreductase subunit C (214 aa).

Belongs to the complex I 30 kDa subunit family. NDH-1 is composed of 14 different subunits. Subunits NuoB, C, D, E, F, and G constitute the peripheral sector of the complex.

It is found in the cell inner membrane. The catalysed reaction is a quinone + NADH + 5 H(+)(in) = a quinol + NAD(+) + 4 H(+)(out). Functionally, NDH-1 shuttles electrons from NADH, via FMN and iron-sulfur (Fe-S) centers, to quinones in the respiratory chain. The immediate electron acceptor for the enzyme in this species is believed to be ubiquinone. Couples the redox reaction to proton translocation (for every two electrons transferred, four hydrogen ions are translocated across the cytoplasmic membrane), and thus conserves the redox energy in a proton gradient. In Francisella tularensis subsp. novicida (strain U112), this protein is NADH-quinone oxidoreductase subunit C.